We begin with the raw amino-acid sequence, 284 residues long: Probable endonuclease 4 (284 aa).

Residues His-69, His-113, Glu-148, Asp-182, His-185, His-217, Asp-230, His-232, and Glu-262 each contribute to the Zn(2+) site.

The protein belongs to the AP endonuclease 2 family. Requires Zn(2+) as cofactor.

The enzyme catalyses Endonucleolytic cleavage to 5'-phosphooligonucleotide end-products.. Its function is as follows. Endonuclease IV plays a role in DNA repair. It cleaves phosphodiester bonds at apurinic or apyrimidinic (AP) sites, generating a 3'-hydroxyl group and a 5'-terminal sugar phosphate. The chain is Probable endonuclease 4 from Bifidobacterium longum subsp. infantis (strain ATCC 15697 / DSM 20088 / JCM 1222 / NCTC 11817 / S12).